An 87-amino-acid polypeptide reads, in one-letter code: UPF0250 protein YbeD (87 aa).

Belongs to the UPF0250 family.

This is UPF0250 protein YbeD from Shigella boydii serotype 18 (strain CDC 3083-94 / BS512).